Reading from the N-terminus, the 367-residue chain is Quinolinate synthase (367 aa).

The iminosuccinate site is built by H45 and S62. C109 provides a ligand contact to [4Fe-4S] cluster. Residues 140 to 142 (YVN) and S161 each bind iminosuccinate. C229 is a binding site for [4Fe-4S] cluster. Residues 255 to 257 (HPE) and T272 each bind iminosuccinate. C319 is a [4Fe-4S] cluster binding site.

It belongs to the quinolinate synthase family. Type 3 subfamily. [4Fe-4S] cluster serves as cofactor.

It localises to the cytoplasm. The enzyme catalyses iminosuccinate + dihydroxyacetone phosphate = quinolinate + phosphate + 2 H2O + H(+). Its pathway is cofactor biosynthesis; NAD(+) biosynthesis; quinolinate from iminoaspartate: step 1/1. In terms of biological role, catalyzes the condensation of iminoaspartate with dihydroxyacetone phosphate to form quinolinate. The sequence is that of Quinolinate synthase from Lysinibacillus sphaericus (strain C3-41).